A 1016-amino-acid chain; its full sequence is Mastermind-like protein 1 (1016 aa).

The segment at 1-123 (MVLPTCPMAE…NLDSATSPQN (123 aa)) is required for interaction with NOTCH proteins. Serine 45 bears the Phosphoserine mark. Disordered stretches follow at residues 65 to 184 (QAKA…LGLD), 263 to 487 (PDED…PSHV), 561 to 617 (KPKP…SQQQ), 658 to 681 (EKQQ…QGSF), and 796 to 953 (AYGQ…GGRA). Residues 67 to 76 (KAKRAGKHRQ) are compositionally biased toward basic residues. Over residues 93–115 (DAADGPEHGRPATHLHDTVKRNL) the composition is skewed to basic and acidic residues. Over residues 116–129 (DSATSPQNGDQQNG) the composition is skewed to polar residues. Serine 120 carries the post-translational modification Phosphoserine. Residues 263 to 282 (PDEDMKDLFNEDFEEKKDPE) show a composition bias toward basic and acidic residues. Positions 283–292 (SSGSATQTPL) are enriched in polar residues. Phosphoserine occurs at positions 303 and 314. Over residues 322-353 (AGQTFLGPSSAPVSTDSPSLGGSQTLFHTSGQ) the composition is skewed to polar residues. Serine 360 is subject to Phosphoserine. Positions 392–403 (ELSSAHQLQQIA) are enriched in polar residues. Positions 413–426 (QNPQQATPAPAPGQ) are enriched in low complexity. Composition is skewed to polar residues over residues 427–439 (MSTW…SHSS), 451–463 (SPSS…TNSK), 577–595 (QEQN…SVGT), and 602–617 (VASS…SQQQ). A compositionally biased stretch (low complexity) spans 801 to 810 (SLGSSGLSQQ). An N6-acetyllysine modification is found at lysine 822. Polar residues predominate over residues 834–885 (GQNSSWQHQGMPNLSGQTPGNSNVSPFTAASSFHMQQQAHLKMSSPQFSQAV). Phosphoserine is present on serine 1015.

It belongs to the mastermind family. As to quaternary structure, interacts (via N-terminus) with NOTCH1, NOTCH2, NOTCH3 and NOTCH4 (via ankyrin repeat region). Interacts (via N-terminus) with p53 (via DNA-binding region). Forms a DNA-binding complex with Notch proteins and RBPSUH/RBP-J kappa/CBF1. Also binds CREBBP/CBP and CDK8. Forms a complex with PRAG1, NOTCH1 and MAML1, in a MAML1-dependent manner. Widely expressed with highest levels in heart, pancreas, peripheral blood leukocytes and spleen.

Its subcellular location is the nucleus speckle. Functionally, acts as a transcriptional coactivator for NOTCH proteins. Has been shown to amplify NOTCH-induced transcription of HES1. Enhances phosphorylation and proteolytic turnover of the NOTCH intracellular domain in the nucleus through interaction with CDK8. Binds to CREBBP/CBP which promotes nucleosome acetylation at NOTCH enhancers and activates transcription. Induces phosphorylation and localization of CREBBP to nuclear foci. Plays a role in hematopoietic development by regulating NOTCH-mediated lymphoid cell fate decisions. The polypeptide is Mastermind-like protein 1 (Homo sapiens (Human)).